A 455-amino-acid polypeptide reads, in one-letter code: MLKIYNTLARAKQTFSPIIPGKVSMYVCGMTVYDYCHLGHARVMVVFDMVNRWLRSSGYEVTYVRNITDIDDKIIARANENGETINALTDRFIAAMNEDAARLGVWRPDLEPRATDYIHEMIAMIVALIEKHHAYAADNGDVYYAVSSFASYGKLSGKSLEDLRAGERVEVDAHKRDPMDFVLWKAAKPGEPSWDSPWGPGRPGWHIECSAMGARHLGPHFDIHGGGQDLQFPHHENEIAQSEGAHGCTFVNYWMHNGFIRVDDEKMSKSLGNFFTIREVLEKYDAEVVRFFILRAHYRSPLNYSSHHLDDAKQALTRLYNTLRGRELPQLDIDWRQPEAERFKQALDDDFNTPEAFAVLFELASEANRTGSAVQAALLKALAGQLGLLQRDPDEFLKGEAVAGLSPDEIERLIAERLAARKCKNFAEADRIRDALTAQGIILEDTPQGTSWRRS.

Residue cysteine 28 coordinates Zn(2+). Positions 30-40 (MTVYDYCHLGH) match the 'HIGH' region motif. The Zn(2+) site is built by cysteine 209, histidine 234, and glutamate 238. The 'KMSKS' region signature appears at 266 to 270 (KMSKS). Lysine 269 is a binding site for ATP.

It belongs to the class-I aminoacyl-tRNA synthetase family. As to quaternary structure, monomer. The cofactor is Zn(2+).

The protein localises to the cytoplasm. The catalysed reaction is tRNA(Cys) + L-cysteine + ATP = L-cysteinyl-tRNA(Cys) + AMP + diphosphate. The chain is Cysteine--tRNA ligase from Methylobacillus flagellatus (strain ATCC 51484 / DSM 6875 / VKM B-1610 / KT).